A 500-amino-acid polypeptide reads, in one-letter code: Monocarboxylate transporter 1 (500 aa).

At 1–22 (MPPAVGGPVGYTPPDGGWGWAV) the chain is on the cytoplasmic side. A helical membrane pass occupies residues 23 to 44 (VIGAFISIGFSYAFPKSITVFF). (S)-lactate is bound at residue Lys38. Residues 45–55 (KEIEGIFHATT) are Extracellular-facing. Residues 56-80 (SEVSWISSIMLAVMYGGGPISSILV) traverse the membrane as a helical segment. Residues 81–84 (NKYG) are Cytoplasmic-facing. The chain crosses the membrane as a helical span at residues 85-105 (SRIVMIVGGCLSGCGLIAASF). Over 106-109 (CNTV) the chain is Extracellular. Residues 110-132 (QQLYVCIGVIGGLGLAFNLNPAL) form a helical membrane-spanning segment. The Cytoplasmic segment spans residues 133 to 146 (TMIGKYFYKRRPLA). Residues 147–169 (NGLAMAGSPVFLCTLAPLNQVFF) form a helical membrane-spanning segment. Residues 170-174 (GIFGW) lie on the Extracellular side of the membrane. A helical membrane pass occupies residues 175-194 (RGSFLILGGLLLNCCVAGAL). At 195–261 (MRPIGPKPTK…FLDLTLFTHR (67 aa)) the chain is on the cytoplasmic side. A phosphoserine mark is found at Ser210 and Ser213. Position 231 is a phosphothreonine (Thr231). The helical transmembrane segment at 262-288 (GFLLYLSGNVIMFFGLFAPLVFLSSYG) threads the bilayer. Residues 289–295 (KSQHYSS) are Extracellular-facing. The chain crosses the membrane as a helical span at residues 296–317 (EKSAFLLSILAFVDMVARPSMG). Asp309 serves as a coordination point for H(+). Arg313 contributes to the (S)-lactate binding site. The Cytoplasmic segment spans residues 318–328 (LVANTKPIRPR). The helical transmembrane segment at 329–349 (IQYFFAASVVANGVCHMLAPL) threads the bilayer. Topologically, residues 350–353 (STTY) are extracellular. A helical membrane pass occupies residues 354–375 (VGFCVYAGFFGFAFGWLSSVLF). The Cytoplasmic portion of the chain corresponds to 376 to 389 (ETLMDLVGPQRFSS). A helical membrane pass occupies residues 390–410 (AVGLVTIVECCPVLLGPPLLG). At 411-421 (RLNDMYGDYKY) the chain is on the extracellular side. Residues 422–443 (TYWACGVVLIISGIYLFIGMGI) form a helical membrane-spanning segment. At 444-500 (NYRLLAKEQKANEQKKESKEEETSIDVAGKPNEVTKAAESPDQKDTDGGPKEEESPV) the chain is on the cytoplasmic side. A compositionally biased stretch (basic and acidic residues) spans 454 to 465 (ANEQKKESKEEE). Positions 454–500 (ANEQKKESKEEETSIDVAGKPNEVTKAAESPDQKDTDGGPKEEESPV) are disordered. Ser461 carries the post-translational modification Phosphoserine. A Phosphothreonine modification is found at Thr466. Residues Ser467, Ser483, and Ser498 each carry the phosphoserine modification. Residues 482-500 (ESPDQKDTDGGPKEEESPV) show a composition bias toward basic and acidic residues.

This sequence belongs to the major facilitator superfamily. Monocarboxylate porter (TC 2.A.1.13) family. Interacts with EMB; interaction mediates SLC16A1 targeting to the plasma membrane. Interacts with isoform 2 of BSG; interaction mediates SLC16A1 targeting to the plasma membrane. As to expression, widely expressed. Detected in heart and in blood lymphocytes and monocytes (at protein level).

Its subcellular location is the cell membrane. The protein resides in the basolateral cell membrane. It is found in the apical cell membrane. It catalyses the reaction (S)-lactate(in) + H(+)(in) = (S)-lactate(out) + H(+)(out). The catalysed reaction is acetate(out) + H(+)(out) = acetate(in) + H(+)(in). The enzyme catalyses acetoacetate(out) + H(+)(out) = acetoacetate(in) + H(+)(in). It carries out the reaction pyruvate(out) + H(+)(out) = pyruvate(in) + H(+)(in). It catalyses the reaction (R)-3-hydroxybutanoate(out) + H(+)(out) = (R)-3-hydroxybutanoate(in) + H(+)(in). The catalysed reaction is 3-methyl-2-oxobutanoate(out) + H(+)(out) = 3-methyl-2-oxobutanoate(in) + H(+)(in). The enzyme catalyses 4-methyl-2-oxopentanoate(out) + H(+)(out) = 4-methyl-2-oxopentanoate(in) + H(+)(in). It carries out the reaction succinate(in) + 2 H(+)(in) = succinate(out) + 2 H(+)(out). Selectively inhibited by AZD3965, that acts as a competitive inhibitor binding to the central channel in the outward open conformation. In terms of biological role, bidirectional proton-coupled monocarboxylate transporter. Catalyzes the rapid transport across the plasma membrane of many monocarboxylates such as lactate, pyruvate, acetate and the ketone bodies acetoacetate and beta-hydroxybutyrate, and thus contributes to the maintenance of intracellular pH. The transport direction is determined by the proton motive force and the concentration gradient of the substrate monocarboxylate. MCT1 is a major lactate exporter. Plays a role in cellular responses to a high-fat diet by modulating the cellular levels of lactate and pyruvate that contribute to the regulation of central metabolic pathways and insulin secretion, with concomitant effects on plasma insulin levels and blood glucose homeostasis. Facilitates the protonated monocarboxylate form of succinate export, that its transient protonation upon muscle cell acidification in exercising muscle and ischemic heart. Functions via alternate outward- and inward-open conformation states. Protonation and deprotonation of 309-Asp is essential for the conformational transition. The sequence is that of Monocarboxylate transporter 1 from Homo sapiens (Human).